The chain runs to 314 residues: Homoserine kinase (314 aa).

Residue 95–105 participates in ATP binding; it reads PHSRGLGSSAS.

This sequence belongs to the GHMP kinase family. Homoserine kinase subfamily.

It is found in the cytoplasm. It catalyses the reaction L-homoserine + ATP = O-phospho-L-homoserine + ADP + H(+). The protein operates within amino-acid biosynthesis; L-threonine biosynthesis; L-threonine from L-aspartate: step 4/5. Functionally, catalyzes the ATP-dependent phosphorylation of L-homoserine to L-homoserine phosphate. The protein is Homoserine kinase of Rhodococcus erythropolis (strain PR4 / NBRC 100887).